The chain runs to 151 residues: Small ribosomal subunit protein uS11 (151 aa).

Positions 129-151 (IEDVTPVPSDSTRRKGGRRGRRL) are disordered. Over residues 142-151 (RKGGRRGRRL) the composition is skewed to basic residues.

This sequence belongs to the universal ribosomal protein uS11 family.

In Procambarus clarkii (Red swamp crayfish), this protein is Small ribosomal subunit protein uS11 (RPS14).